The sequence spans 183 residues: Shikimate kinase (183 aa).

18 to 23 is a binding site for ATP; that stretch reads GVGKTT. Residue threonine 22 participates in Mg(2+) binding. Aspartate 40, arginine 64, and glycine 86 together coordinate substrate. ATP is bound at residue arginine 125. Arginine 143 contacts substrate.

It belongs to the shikimate kinase family. Monomer. The cofactor is Mg(2+).

The protein resides in the cytoplasm. It carries out the reaction shikimate + ATP = 3-phosphoshikimate + ADP + H(+). It functions in the pathway metabolic intermediate biosynthesis; chorismate biosynthesis; chorismate from D-erythrose 4-phosphate and phosphoenolpyruvate: step 5/7. In terms of biological role, catalyzes the specific phosphorylation of the 3-hydroxyl group of shikimic acid using ATP as a cosubstrate. This is Shikimate kinase from Oceanobacillus iheyensis (strain DSM 14371 / CIP 107618 / JCM 11309 / KCTC 3954 / HTE831).